A 188-amino-acid chain; its full sequence is Protein salivary glands marred (188 aa).

The protein belongs to the TNFAIP8 family. As to quaternary structure, interacts with the Ste20-like MAP kinase msn.

Its subcellular location is the cytoplasm. It localises to the cytoskeleton. In terms of biological role, important for modulating JNK signaling, cytoskeletal remodeling and autophagy in larval salivary glands. During salivary gland development, involved in the positive regulation of the JNK signaling pathway, acting downstream of the TNF ligand egr and upstream of bsk. The sequence is that of Protein salivary glands marred from Drosophila melanogaster (Fruit fly).